Reading from the N-terminus, the 125-residue chain is Protein ApaG (125 aa).

The region spanning 3 to 125 (TAVTEGIEVT…FPLVVPGSLN (123 aa)) is the ApaG domain.

The protein is Protein ApaG of Anaeromyxobacter dehalogenans (strain 2CP-C).